The chain runs to 310 residues: MVMSVINWFEDRQKFGGLIGAFLEEATRSSMTNERDRRISVNANKGLWARCDNCGNMLYVKFLKQNRSVCEECGYHLSMSSMERIELLIDPNTWIPLDEDMSARDILSFSDEDSYETRILLSQEKTGLTDAVQTGIGYLNGTLIALGVMDFHFMGGSMGSVVGEKITRLIEYATQRLLPLVLICASGGARMQEGTLSLMQMAKISSVLQLYQVQNKLLYISVLTYPTTGGVTASFGMLGDIIIAEPKAYIAFAGKRVIEQTLRQKIPDGFQAAESLFDNGLLDLIVPRNLLKGVLSEISGLYLSVPYNKN.

A CoA carboxyltransferase N-terminal domain is found at 47-310; the sequence is LWARCDNCGN…LYLSVPYNKN (264 aa). 4 residues coordinate Zn(2+): cysteine 51, cysteine 54, cysteine 70, and cysteine 73. The C4-type zinc finger occupies 51 to 73; it reads CDNCGNMLYVKFLKQNRSVCEEC.

The protein belongs to the AccD/PCCB family. Acetyl-CoA carboxylase is a heterohexamer composed of biotin carboxyl carrier protein, biotin carboxylase and 2 subunits each of ACCase subunit alpha and ACCase plastid-coded subunit beta (accD). The cofactor is Zn(2+).

It is found in the plastid. It localises to the chloroplast stroma. It catalyses the reaction N(6)-carboxybiotinyl-L-lysyl-[protein] + acetyl-CoA = N(6)-biotinyl-L-lysyl-[protein] + malonyl-CoA. The protein operates within lipid metabolism; malonyl-CoA biosynthesis; malonyl-CoA from acetyl-CoA: step 1/1. Its function is as follows. Component of the acetyl coenzyme A carboxylase (ACC) complex. Biotin carboxylase (BC) catalyzes the carboxylation of biotin on its carrier protein (BCCP) and then the CO(2) group is transferred by the transcarboxylase to acetyl-CoA to form malonyl-CoA. In Adiantum capillus-veneris (Maidenhair fern), this protein is Acetyl-coenzyme A carboxylase carboxyl transferase subunit beta, chloroplastic.